The following is a 148-amino-acid chain: Gastrin-releasing peptide (148 aa).

The first 23 residues, methionine 1–alanine 23, serve as a signal peptide directing secretion. Methionine 50 is subject to Methionine amide. A propeptide spanning residues serine 54–glutamine 148 is cleaved from the precursor. The tract at residues glutamate 89 to glutamine 148 is disordered.

This sequence belongs to the bombesin/neuromedin-B/ranatensin family.

Its subcellular location is the secreted. The protein resides in the cytoplasmic vesicle. It localises to the secretory vesicle lumen. The protein localises to the cell projection. It is found in the neuron projection. Stimulates the release of gastrin and other gastrointestinal hormones. Contributes to the perception of prurient stimuli and to the transmission of itch signals in the spinal cord that promote scratching behavior. Contributes primarily to nonhistaminergic itch sensation. In one study, shown to act in the amygdala as part of an inhibitory network which inhibits memory specifically related to learned fear. In another study, shown to act on vasoactive intestinal peptide (VIP)-expressing cells in the auditory cortex, most likely via extrasynaptic diffusion from local and long-range sources, to mediate disinhibition of glutamatergic cells via VIP cell-specific GRPR signaling which leads to enhanced auditory fear memories. Contributes to the regulation of food intake. Inhibits voltage-gated sodium channels but enhances voltage-gated potassium channels in hippocampal neurons. Induces sighing by acting directly on the pre-Botzinger complex, a cluster of several thousand neurons in the ventrolateral medulla responsible for inspiration during respiratory activity. Its function is as follows. Induces an itch response through activation of receptors present on mast cells, triggering mast cell degranulation. The sequence is that of Gastrin-releasing peptide (GRP) from Homo sapiens (Human).